A 207-amino-acid chain; its full sequence is Hepatic lectin (207 aa).

N-acetylmethionine is present on Met-1. Topologically, residues Met-1–Arg-23 are cytoplasmic. The helical; Signal-anchor for type II membrane protein transmembrane segment at Ser-24–Ala-48 threads the bilayer. Residues Arg-49 to Lys-207 lie on the Extracellular side of the membrane. An N-linked (GlcNAc...) asparagine glycan is attached at Asn-67. Residues Pro-77 to Lys-203 enclose the C-type lectin domain. Disulfide bonds link Cys-78–Cys-92, Cys-109–Cys-201, and Cys-179–Cys-193.

Post-translationally, some or all of the cysteines are involved in disulfide bonds.

It is found in the membrane. Its function is as follows. Hepatic lectin is a membrane receptor protein that recognizes and binds exposed N-acetylglucosamine moieties of plasma glycoproteins, thus mediating their clearance (from the circulation) and endocytosis. This Gallus gallus (Chicken) protein is Hepatic lectin.